A 270-amino-acid chain; its full sequence is Phosphatidylglycerol--prolipoprotein diacylglyceryl transferase (270 aa).

7 consecutive transmembrane segments (helical) span residues 17–37 (LAIR…LWFG), 59–79 (MLFY…VLFY), 95–115 (WEGG…MWVF), 129–149 (FIAP…FING), 175–195 (PSQL…LWLF), 202–222 (MGAV…LAEF), and 237–257 (LSMG…MVVW). R142 provides a ligand contact to a 1,2-diacyl-sn-glycero-3-phospho-(1'-sn-glycerol).

Belongs to the Lgt family.

The protein localises to the cell inner membrane. The catalysed reaction is L-cysteinyl-[prolipoprotein] + a 1,2-diacyl-sn-glycero-3-phospho-(1'-sn-glycerol) = an S-1,2-diacyl-sn-glyceryl-L-cysteinyl-[prolipoprotein] + sn-glycerol 1-phosphate + H(+). Its pathway is protein modification; lipoprotein biosynthesis (diacylglyceryl transfer). Catalyzes the transfer of the diacylglyceryl group from phosphatidylglycerol to the sulfhydryl group of the N-terminal cysteine of a prolipoprotein, the first step in the formation of mature lipoproteins. The chain is Phosphatidylglycerol--prolipoprotein diacylglyceryl transferase from Cupriavidus metallidurans (strain ATCC 43123 / DSM 2839 / NBRC 102507 / CH34) (Ralstonia metallidurans).